Reading from the N-terminus, the 517-residue chain is MIEFLIGLIAAVVGILVGYLIARKINNANYEIFLEQAKAKAKAIEFEAEGILRNSKISVQEAEFEAKKAYEDKALKLQKDYNAKFDEISKKEQTVLTEQEILKDSREELEKEKKSAQTIYDEGTSLKKTYETKVEESLKLLERVAGLTEDEAKSEILQKVEEKSRAEIAHIVRKYEEEAKKEAKRNANYILAQATTRYAGEYAAERLINVVNIKNDDLKGRIIGKDGRNIKTLEMISGVDVIIDDTPNAIILSSHNLYRRAIAVRTVELLVEDGRIQPARIEDVYKKVSEEFEAGIQEEGENIVMDLGLTKIHPEIVKLIGKLKFRASYGQNALIHSLEVAHLAGIIAAETGGDENLARRAGILHDIGKALTHEFEGSHVDLGAEICKRYKENPVVINAIYAHHGHEEPTSVESAAVCTADVLSAARPGARREVLEAFLKRVSEIENIATSKEGVKQAYAINAGREIRVIANAKLVNDDEAVLLAKEIAEEIQAKVQYPGEIKVNIIRETRAVDYAK.

The helical transmembrane segment at 1-21 (MIEFLIGLIAAVVGILVGYLI) threads the bilayer. Residues 207–271 (LINVVNIKND…IAVRTVELLV (65 aa)) form the KH domain. Positions 333 to 426 (ALIHSLEVAH…VCTADVLSAA (94 aa)) constitute an HD domain.

It belongs to the RNase Y family.

It localises to the cell membrane. Functionally, endoribonuclease that initiates mRNA decay. In Campylobacter hominis (strain ATCC BAA-381 / DSM 21671 / CCUG 45161 / LMG 19568 / NCTC 13146 / CH001A), this protein is Ribonuclease Y.